The sequence spans 260 residues: UPF0246 protein Bcen2424_2223 (260 aa).

Belongs to the UPF0246 family.

This Burkholderia cenocepacia (strain HI2424) protein is UPF0246 protein Bcen2424_2223.